The following is a 205-amino-acid chain: uncharacterized protein (205 aa).

Residues 1–63 lie on the Cytoplasmic side of the membrane; that stretch reads MQRTRELESS…QHPKVAKFLK (63 aa). A helical membrane pass occupies residues 64–84; the sequence is VQLVFDLISLFIFATHQLLLL. Residues 85-124 lie on the Extracellular side of the membrane; sequence EDGNFGKHYFKRKTKRCSKFSCSRCNANAHHPKWFKFKHS. Residues 125–145 traverse the membrane as a helical segment; sequence LLCLGTFCFGVYSLVKINKFF. At 146–205 the chain is on the cytoplasmic side; the sequence is KTDQTVDLNRLLELFFWQLNAILNMKLFAFYGDHLESHSAPLDVYEDSFANKSSSGGDEV.

Its subcellular location is the membrane. This is an uncharacterized protein from Saccharomyces cerevisiae (strain ATCC 204508 / S288c) (Baker's yeast).